Reading from the N-terminus, the 517-residue chain is B3 domain-containing protein REM1 (517 aa).

Positions 7–92 (FSLFQQKFRT…VFHVAVVSPS (86 aa)) form a DNA-binding region, TF-B3 1. A compositionally biased stretch (acidic residues) spans 115-140 (DDVDDDDYGQDDEDDDDDDDEGEDNI). The disordered stretch occupies residues 115–158 (DDVDDDDYGQDDEDDDDDDDEGEDNIENISEKTDKRQEADSSSD). Positions 143–157 (ISEKTDKRQEADSSS) are enriched in basic and acidic residues. DNA-binding regions (TF-B3) lie at residues 162–259 (FITA…CPQE) and 285–385 (FLIV…FCSK). The segment at 393 to 415 (GKGNQRTRKKRACETAPQPRNVK) is disordered.

As to expression, expressed in the shoot apical meristem (SAM), in the inflorescence apex and flowers.

The protein localises to the nucleus. In terms of biological role, may play a role in flower development. This Arabidopsis thaliana (Mouse-ear cress) protein is B3 domain-containing protein REM1 (REM1).